The primary structure comprises 180 residues: ATP-dependent protease subunit HslV (180 aa).

The active site involves Thr-8. Residues Ala-165, Cys-168, and Thr-171 each coordinate Na(+).

This sequence belongs to the peptidase T1B family. HslV subfamily. A double ring-shaped homohexamer of HslV is capped on each side by a ring-shaped HslU homohexamer. The assembly of the HslU/HslV complex is dependent on binding of ATP.

The protein localises to the cytoplasm. It catalyses the reaction ATP-dependent cleavage of peptide bonds with broad specificity.. Its activity is regulated as follows. Allosterically activated by HslU binding. Its function is as follows. Protease subunit of a proteasome-like degradation complex believed to be a general protein degrading machinery. This chain is ATP-dependent protease subunit HslV, found in Macrococcus caseolyticus (strain JCSC5402) (Macrococcoides caseolyticum).